Here is a 128-residue protein sequence, read N- to C-terminus: Large ribosomal subunit protein bL12 (128 aa).

Belongs to the bacterial ribosomal protein bL12 family. In terms of assembly, homodimer. Part of the ribosomal stalk of the 50S ribosomal subunit. Forms a multimeric L10(L12)X complex, where L10 forms an elongated spine to which 2 to 4 L12 dimers bind in a sequential fashion. Binds GTP-bound translation factors.

Forms part of the ribosomal stalk which helps the ribosome interact with GTP-bound translation factors. Is thus essential for accurate translation. In Synechocystis sp. (strain ATCC 27184 / PCC 6803 / Kazusa), this protein is Large ribosomal subunit protein bL12.